Here is a 184-residue protein sequence, read N- to C-terminus: J-type co-chaperone JAC1, mitochondrial (184 aa).

A mitochondrion-targeting transit peptide spans 1–10; it reads MLKYLVQRRF. Residues 13–82 form the J domain; that stretch reads TFYELFPKTF…LRRSQYMLKL (70 aa). Positions 48–50 match the HSP70 binding motif; it reads HPD. The segment at 71-184 is interaction with ISU1; sequence DPLRRSQYML…APGKQLEMNH (114 aa).

It belongs to the HscB family. In terms of assembly, interacts with ISU1 and SSQ1.

The protein resides in the mitochondrion matrix. In terms of biological role, co-chaperone required for the assembly of iron-sulfur (Fe/S) clusters in mitochondria. Stimulates the ATPase activity of its specialized Hsp70 chaperone partner SSQ1, to mediate the transfer of iron-sulfur clusters from ISU1 to GRX5. Binds to the substrate protein ISU1 and targets it to SSQ1. The chain is J-type co-chaperone JAC1, mitochondrial from Saccharomyces cerevisiae (strain ATCC 204508 / S288c) (Baker's yeast).